The following is a 61-amino-acid chain: Large ribosomal subunit protein uL29 (61 aa).

This sequence belongs to the universal ribosomal protein uL29 family.

This is Large ribosomal subunit protein uL29 from Stenotrophomonas maltophilia (strain K279a).